Consider the following 243-residue polypeptide: ATP-dependent dethiobiotin synthetase BioD (243 aa).

12–17 (DVGKTL) is a binding site for ATP. Thr16 is a binding site for Mg(2+). Lys37 is a catalytic residue. Position 41 (Ser41) interacts with substrate. Residues Asp54, 115–118 (EGCG), and 179–180 (NM) each bind ATP. Mg(2+)-binding residues include Asp54 and Glu115.

The protein belongs to the dethiobiotin synthetase family. As to quaternary structure, homodimer. Requires Mg(2+) as cofactor.

The protein localises to the cytoplasm. The enzyme catalyses (7R,8S)-7,8-diammoniononanoate + CO2 + ATP = (4R,5S)-dethiobiotin + ADP + phosphate + 3 H(+). Its pathway is cofactor biosynthesis; biotin biosynthesis; biotin from 7,8-diaminononanoate: step 1/2. Functionally, catalyzes a mechanistically unusual reaction, the ATP-dependent insertion of CO2 between the N7 and N8 nitrogen atoms of 7,8-diaminopelargonic acid (DAPA, also called 7,8-diammoniononanoate) to form a ureido ring. In Caldicellulosiruptor saccharolyticus (strain ATCC 43494 / DSM 8903 / Tp8T 6331), this protein is ATP-dependent dethiobiotin synthetase BioD.